The chain runs to 997 residues: Malignant fibrous histiocytoma-amplified sequence 1 homolog (997 aa).

LRR repeat units lie at residues Ser32–Gly53, Asp54–Ser76, Asn79–Leu100, Arg102–Leu123, Lys125–Leu146, Asp148–Pro170, Ser171–Val192, Ala194–Met216, Ser218–Leu239, Asn241–Leu262, Lys264–Val286, Asp287–Met308, Lys310–Leu331, and Phe333–Leu354. Residues Gln393 to Arg626 enclose the Roc domain. Residues Pro637 to Ile861 form the COR domain.

It is found in the cytoplasm. Probable GTP-binding protein. Functions in innate immunity and more specifically the inflammatory response as a regulator of the Toll-like receptor TLR2 and TLR4 signaling pathways. The chain is Malignant fibrous histiocytoma-amplified sequence 1 homolog (mfhas1) from Xenopus tropicalis (Western clawed frog).